The following is a 410-amino-acid chain: Cytochrome P450 (410 aa).

C359 is a binding site for heme.

The protein belongs to the cytochrome P450 family. It depends on heme as a cofactor.

The polypeptide is Cytochrome P450 (cypA) (Bacillus subtilis (strain 168)).